A 162-amino-acid chain; its full sequence is uncharacterized protein (162 aa).

Positions 1–21 are cleaved as a signal peptide; the sequence is MEGIMKKFFALMTLIAGISFS. A coiled-coil region spans residues 32–118; that stretch reads VIRESKFIAK…KKAELEKMVF (87 aa).

The protein belongs to the Skp family.

This is an uncharacterized protein from Aquifex aeolicus (strain VF5).